The chain runs to 498 residues: MSTSSKLSTNIKDLSLFDLEEFPARSYIGGKWVTAASGKTFDVENPGLNETLAPVTDMSVEETRKAIKVAHEAFLSYRNSDIKERYAILRRWYDLIMENADDLATMMTLENGKALGDAKGEVVYAAKFIDWFAGEALRISGDSSMSSNPQNRIITIKQPVGVVGIITPWNFPAAMITRKVGAALAAGCTVVIRPAAETPFTALALAKLAERAGVPAGVLNMVTANSPSEHGIELTTNPLIRKVSFTGSTNVGKILAKQSSSTLKKLSLELGGNAPFIVFEDADLEKAADALMACKFRGSGQTCVCANRIYVHSSVYDAFVDLVTERVSKFKLGYGLDAGVTHGPLISEKAISKVKQHVEDAVQKGGVVVTGGKVASNLGPMYFEPTVIINAKQGMLISEEETFGPVGALFKFDTEDEVVAWANDSPVGLAGYLFSKDISRVFRVGEALQVGMVGCNTGLVSDVLSPFGGVKESGFGREGSKYGISEYLDIKSLTISTL.

247–252 (GSTNVG) serves as a coordination point for NAD(+). Residues glutamate 269 and cysteine 303 contribute to the active site.

Belongs to the aldehyde dehydrogenase family. As to quaternary structure, homotetramer.

It localises to the cytoplasm. The catalysed reaction is succinate semialdehyde + NAD(+) + H2O = succinate + NADH + 2 H(+). It carries out the reaction succinate semialdehyde + NADP(+) + H2O = succinate + NADPH + 2 H(+). Its pathway is amino-acid degradation; 4-aminobutanoate degradation. Functionally, catalyzes the oxidation of succinate semialdehyde to succinate. Can utilize both NAD(+) or NADP(+) as a coenzyme. Functions in a gamma-aminobutyrate (GABA) degradation pathway that allows growth utilizing GABA as a nitrogen source. Functions in the GABA shunt, which allows to bypass 2 reactions in the TCA cycle by removing alpha-ketoglutarate from the cycle and feeding succinate and NADH back into the cycle. The polypeptide is Succinate-semialdehyde dehydrogenase [NADP(+)] 1 (ssd1) (Schizosaccharomyces pombe (strain 972 / ATCC 24843) (Fission yeast)).